The sequence spans 197 residues: Recombination protein RecR (197 aa).

A C4-type zinc finger spans residues 56-71; sequence CRLCNNFSEAEVCEVC. In terms of domain architecture, Toprim spans 79 to 174; the sequence is RQLAVVEMPA…KVSRLARGVP (96 aa).

Belongs to the RecR family.

Its function is as follows. May play a role in DNA repair. It seems to be involved in an RecBC-independent recombinational process of DNA repair. It may act with RecF and RecO. In Thiobacillus denitrificans (strain ATCC 25259 / T1), this protein is Recombination protein RecR.